The primary structure comprises 507 residues: MAVCARLCGVGPARGCRRRQQRRGPAETAAADSEADTDPEEERIEAGPARCSLLELPPELLVEIFASLPGTDLPSLAQVCSRFRRILHTDTIWRRRCREEYGVCENLRKLEITGVSCRDVYAKLLHRYRHILGLWQPDIGPYGGLLNVVVDGLFIIGWMYLPPHDPHVGDPMRFKPLFRIHLMERKSATVECMYGHKGPHNGHIQIVKRDEFSTKCNQTDHHRMSGGRQEEFRTWLREEWGRTLEDIFHEHMQELILMKFIYTSQYDNCLTYRRIYLPPSHPDDLIKPGLFKGTYGSHGLEIVMLSFHGSRARGTKITGDPNIPAGQQTVEIDLQRRIQLPDVENLRNFNELSRIVLEVREQVRQEQEAGEGPAPHREPAVKDPEGPPAKASKEAGPGAEAAEQSSTSGQGQPFVLPAGVSSRNEDYPRTCRLCFYGTGLIAGHGFTSPERTPGVFVLFDEDRFGFLWLELKSFSLYSRVQATFQNADAPSPQAFDEMLRNIQSLTS.

The tract at residues 19 to 42 (RQQRRGPAETAAADSEADTDPEEE) is disordered. The residue at position 33 (Ser33) is a Phosphoserine. The span at 33-42 (SEADTDPEEE) shows a compositional bias: acidic residues. Thr37 carries the phosphothreonine modification. The D box motif lies at 50–55 (RCSLLE). The 47-residue stretch at 50 to 96 (RCSLLELPPELLVEIFASLPGTDLPSLAQVCSRFRRILHTDTIWRRR) folds into the F-box domain. Cys192, His200, Cys216, and His222 together coordinate Zn(2+). A Phosphoserine; by ATM modification is found at Ser264. The short motif at 283-285 (DDL) is the DDL motif element. The interval 364-421 (RQEQEAGEGPAPHREPAVKDPEGPPAKASKEAGPGAEAAEQSSTSGQGQPFVLPAGVS) is disordered. Residues 374 to 385 (APHREPAVKDPE) show a composition bias toward basic and acidic residues. Ser448 is modified (phosphoserine).

The protein belongs to the FBXO31 family. Part of a SCF (SKP1-cullin-F-box) protein ligase complex SCF(FBXO31) composed of CUL1, SKP1, RBX1 and FBXO31. Interacts (when phosphorylated at Ser-33) with CDC20, promoting ubiquitination by the APC/C complex. Post-translationally, phosphorylation at Ser-264 by ATM following gamma-irradiation results in its stabilization. Phosphorylation at Ser-448 in absence of stress promotes its ubiquitination and degradation by the SCF(FBXO46) complex. Phosphorylation at Ser-33 by AKT1 promotes association with CDC20 and ubiquitination by the APC/C complex. Ubiquitinated by the SCF(FBXO46) complex in absence of stress, promoting its degradation. Ubiquitinated by the APC/C complex following phosphorylation at Ser-33, leading to its degradation by the proteasome.

It localises to the cytoplasm. It is found in the cytoskeleton. Its subcellular location is the microtubule organizing center. The protein localises to the centrosome. It functions in the pathway protein modification; protein ubiquitination. Substrate-recognition component of the SCF(FBXO31) protein ligase complex, which specifically mediates the ubiquitination of proteins amidated at their C-terminus in response to oxidative stress, leading to their degradation by the proteasome. FBXO31 specifically recognizes and binds C-terminal peptides bearing an amide: C-terminal amidation in response to oxidative stress takes place following protein fragmentation. The SCF(FBXO31) also plays a role in G1 arrest following DNA damage by mediating ubiquitination of phosphorylated cyclin-D1 (CCND1), promoting its degradation by the proteasome, resulting in G1 arrest. The SCF(FBXO31) complex is however not a major regulator of CCND1 stability during the G1/S transition. In response to genotoxic stress, the SCF(FBXO31) complex directs ubiquitination and degradation of phosphorylated MDM2, thereby promoting p53/TP53-mediated DNA damage response. SCF(FBXO31) complex is required for genomic integrity by catalyzing ubiquitination and degradation of cyclin-A (CCNA1 and/or CCNA2) during the G1 phase. In response to genotoxic stress, the SCF(FBXO31) complex directs ubiquitination and degradation of phosphorylated FBXO46 and MAP2K6. SCF(FBXO31) complex promotes ubiquitination and degradation of CDT1 during the G2 phase to prevent re-replication. The SCF(FBXO31) complex also mediates ubiquitination and degradation of DUSP6, OGT and PARD6A. The polypeptide is F-box only protein 31 (Rattus norvegicus (Rat)).